The following is a 150-amino-acid chain: Large ribosomal subunit protein bL9 (150 aa).

Belongs to the bacterial ribosomal protein bL9 family.

In terms of biological role, binds to the 23S rRNA. The protein is Large ribosomal subunit protein bL9 of Streptococcus equi subsp. zooepidemicus (strain MGCS10565).